The sequence spans 240 residues: UDP-2,3-diacylglucosamine hydrolase (240 aa).

Residues D9, H11, D43, N81, and H116 each contribute to the Mn(2+) site. Substrate is bound at residue 81–82 (NR). D124, S162, K166, K169, and H197 together coordinate substrate. Positions 197 and 199 each coordinate Mn(2+).

The protein belongs to the LpxH family. Mn(2+) is required as a cofactor.

It localises to the cell inner membrane. The enzyme catalyses UDP-2-N,3-O-bis[(3R)-3-hydroxytetradecanoyl]-alpha-D-glucosamine + H2O = 2-N,3-O-bis[(3R)-3-hydroxytetradecanoyl]-alpha-D-glucosaminyl 1-phosphate + UMP + 2 H(+). The protein operates within glycolipid biosynthesis; lipid IV(A) biosynthesis; lipid IV(A) from (3R)-3-hydroxytetradecanoyl-[acyl-carrier-protein] and UDP-N-acetyl-alpha-D-glucosamine: step 4/6. In terms of biological role, hydrolyzes the pyrophosphate bond of UDP-2,3-diacylglucosamine to yield 2,3-diacylglucosamine 1-phosphate (lipid X) and UMP by catalyzing the attack of water at the alpha-P atom. Involved in the biosynthesis of lipid A, a phosphorylated glycolipid that anchors the lipopolysaccharide to the outer membrane of the cell. The chain is UDP-2,3-diacylglucosamine hydrolase from Neisseria gonorrhoeae (strain ATCC 700825 / FA 1090).